The chain runs to 579 residues: L-arabinonate dehydratase (579 aa).

Cys59 provides a ligand contact to [2Fe-2S] cluster. Glu91 serves as a coordination point for Mg(2+). Cys127 contacts [2Fe-2S] cluster. Residue Asp128 participates in Mg(2+) binding. [2Fe-2S] cluster is bound at residue Cys200. Position 453 (Glu453) interacts with Mg(2+).

This sequence belongs to the IlvD/Edd family. Homotetramer. Requires [2Fe-2S] cluster as cofactor. The cofactor is Mg(2+).

The enzyme catalyses L-arabinonate = 2-dehydro-3-deoxy-L-arabinonate + H2O. The catalysed reaction is D-galactonate = 2-dehydro-3-deoxy-D-galactonate + H2O. It catalyses the reaction D-fuconate = 2-dehydro-3-deoxy-D-fuconate + H2O. The protein operates within carbohydrate metabolism. Its function is as follows. Catalyzes the dehydration of L-arabinonate to 2-dehydro-3-deoxy-L-arabinonate during L-arabinose degradation. Can also dehydrate D-galactonate and D-fuconate with good catalytic efficiency. Has weak activity with D-xylonate and D-gluconate. The chain is L-arabinonate dehydratase from Rhizobium leguminosarum bv. trifolii (strain WSM2304).